Here is a 482-residue protein sequence, read N- to C-terminus: MFS-type transporter cnsL (482 aa).

A helical transmembrane segment spans residues 73-93 (LFVCATLSGLDKTAISAAAVY). Asparagine 100 carries N-linked (GlcNAc...) asparagine glycosylation. 9 helical membrane passes run 108–128 (WIGS…AYCL), 131–151 (VPAV…EMSV), 170–190 (IILN…VGYY), 199–219 (IIFL…YFVL), 304–324 (LLAM…SYLA), 333–353 (AIVT…YALP), 361–381 (LVGL…VSVY), 392–412 (ITLY…GPQT), and 426–446 (VAMI…GVVC).

Belongs to the major facilitator superfamily. Allantoate permease family.

The protein resides in the cell membrane. In terms of biological role, MFS-type transporter; part of the gene cluster that mediates the biosynthesis of communesins, a prominent class of indole alkaloids with great potential as pharmaceuticals. With the MFS transporter cnsO, is most likely responsible for cummunesins secretion and thereby may contribute to intrinsic resistance. This is MFS-type transporter cnsL from Penicillium expansum (Blue mold rot fungus).